The following is a 355-amino-acid chain: Heat-inducible transcription repressor HrcA (355 aa).

It belongs to the HrcA family.

In terms of biological role, negative regulator of class I heat shock genes (grpE-dnaK-dnaJ and groELS operons). Prevents heat-shock induction of these operons. This is Heat-inducible transcription repressor HrcA from Nitratidesulfovibrio vulgaris (strain ATCC 29579 / DSM 644 / CCUG 34227 / NCIMB 8303 / VKM B-1760 / Hildenborough) (Desulfovibrio vulgaris).